A 261-amino-acid polypeptide reads, in one-letter code: Carbonic anhydrase 1 (261 aa).

Residues 1–31 (MASPDWGYDDKNGPEQWSKLYPIANGNNQSP) form a disordered region. Alanine 2 is subject to N-acetylalanine. In terms of domain architecture, Alpha-carbonic anhydrase spans 4-261 (PDWGYDDKNG…LKGRTVRASF (258 aa)). Residue histidine 65 is the Proton donor/acceptor of the active site. Histidine 65, histidine 68, histidine 95, histidine 97, and histidine 120 together coordinate Zn(2+). Residues threonine 200 and 200-201 (TH) each bind substrate. Histidine 201 serves as a coordination point for Zn(2+). Residues 241–261 (PMQHNNRPTQPLKGRTVRASF) form a disordered region.

Belongs to the alpha-carbonic anhydrase family. The cofactor is Zn(2+).

The protein localises to the cytoplasm. It catalyses the reaction hydrogencarbonate + H(+) = CO2 + H2O. The catalysed reaction is urea = cyanamide + H2O. With respect to regulation, activated by histamine, imidazole, L-adrenaline, L- and D-histidine, and L- and D-phenylalanine. Inhibited by coumarins, sulfonamide derivatives such as acetazolamide, benzenesulfonamide and derivatives (4-carboxyethylbenzene-sulfonamide, 4-carboxyethylbenzene-sulfonamide ethyl ester, 4-(acetyl-2-aminoethyl)benzene-sulfonamide, 4-aminoethylbenzene-sulfonamide), and 'prong inhibitors' BR15, BR17, BR22 and BR30. Activated by a short exposition to Foscarnet (phosphonoformate trisodium salt), but inhibited by a long one. Esterase activity weakly reduced by cyanamide. Its function is as follows. Catalyzes the reversible hydration of carbon dioxide. Can hydrate cyanamide to urea. In Homo sapiens (Human), this protein is Carbonic anhydrase 1 (CA1).